The following is a 517-amino-acid chain: G-protein coupled receptor Mth (517 aa).

A signal peptide spans 1–27; sequence MKLFWVKRLLRISTVVVTLLLLQRTNA. Residues 28-221 are Extracellular-facing; the sequence is AIPDCDYYDT…CLISPSRMGQ (194 aa). Cystine bridges form between cysteine 32/cysteine 86, cysteine 88/cysteine 93, cysteine 97/cysteine 191, cysteine 98/cysteine 109, and cysteine 153/cysteine 212. Asparagine 48 and asparagine 61 each carry an N-linked (GlcNAc...) asparagine glycan. Residues asparagine 126, asparagine 173, and asparagine 201 are each glycosylated (N-linked (GlcNAc...) asparagine). A helical transmembrane segment spans residues 222–242; it reads TVVMITSLVCMVLTITVYLFV. Residues 243 to 251 lie on the Cytoplasmic side of the membrane; that stretch reads KKLQNLHGK. The chain crosses the membrane as a helical span at residues 252–272; it reads CFMCYMVCLFMAYLLLLLNLW. Over 273-279 the chain is Extracellular; it reads QMSQNFC. A helical membrane pass occupies residues 280–300; the sequence is ITAGFLGYFFVMAAFLWLSVI. Over 301–323 the chain is Cytoplasmic; that stretch reads SLHLWNTFSGSAHNANRFLSEHR. Residues 324–344 form a helical membrane-spanning segment; it reads FLAYNTYAWGMAVVLTGITYL. The Extracellular segment spans residues 345–373; sequence ADKVVENEDWNPRMGFGGHCWICTQSWSA. The helical transmembrane segment at 374-394 threads the bilayer; sequence MLYFYGPMVFLIAFNITMFIL. The Cytoplasmic portion of the chain corresponds to 395 to 427; sequence TANRIIGVKKDIQKFAHRQERKQKLNSDKQTYT. The helical transmembrane segment at 428 to 448 threads the bilayer; sequence FFLRLFIIMGLTWSLEIGSYI. The Extracellular portion of the chain corresponds to 449-457; that stretch reads SQFNQTWSN. An N-linked (GlcNAc...) asparagine glycan is attached at asparagine 452. A helical membrane pass occupies residues 458–478; that stretch reads VFLVADYLNWSQGIIIFILFV. Over 479–517 the chain is Cytoplasmic; sequence LKRSTLRLLMESIRGEGEEVNDSEEEISLENTKYDRNVL.

Belongs to the G-protein coupled receptor 2 family. Mth subfamily. Homodimer.

Its subcellular location is the cell membrane. Functionally, involved in biological aging and stress response. Essential for adult survival. This is G-protein coupled receptor Mth (mth) from Drosophila yakuba (Fruit fly).